The primary structure comprises 202 residues: Guanylate kinase (202 aa).

A Guanylate kinase-like domain is found at 3–181 (GNLFVVAAPS…ALDDLRAVVR (179 aa)). 10 to 17 (APSGAGKT) serves as a coordination point for ATP.

The protein belongs to the guanylate kinase family.

It is found in the cytoplasm. It catalyses the reaction GMP + ATP = GDP + ADP. Functionally, essential for recycling GMP and indirectly, cGMP. The protein is Guanylate kinase of Dechloromonas aromatica (strain RCB).